The primary structure comprises 202 residues: Type II restriction enzyme MthZI (202 aa).

The catalysed reaction is Endonucleolytic cleavage of DNA to give specific double-stranded fragments with terminal 5'-phosphates.. Functionally, a P subtype restriction enzyme that recognizes the double-stranded sequence 5'-CTAG-3' and cleaves after C-1. This is Type II restriction enzyme MthZI from Methanothermobacter thermautotrophicus (Methanobacterium thermoformicicum).